The sequence spans 543 residues: Protein SGE1 (543 aa).

The Cytoplasmic portion of the chain corresponds to 1–8; it reads MKSTLSLT. A helical transmembrane segment spans residues 9–29; the sequence is LCVISLLLTLFLAALDIVIVV. The Extracellular segment spans residues 30-41; that stretch reads TLYDTIGIKFHD. The chain crosses the membrane as a helical span at residues 42 to 62; it reads FGNIGWLVTGYALSNAVFMLL. The Cytoplasmic portion of the chain corresponds to 63–79; sequence WGRLAEILGTKECLMIS. The helical transmembrane segment at 80 to 100 threads the bilayer; it reads VIVFEIGSLISALSNSMATLI. Topologically, residues 101-103 are extracellular; the sequence is SGR. The helical transmembrane segment at 104–124 threads the bilayer; that stretch reads VVAGFGGSGIESLAFVVGTSI. Topologically, residues 125–131 are cytoplasmic; that stretch reads VRENHRG. A helical transmembrane segment spans residues 132–152; the sequence is IMITALAISYVIAEGVGPFIG. At 153-162 the chain is on the extracellular side; that stretch reads GAFNEHLSWR. Residues 163 to 183 traverse the membrane as a helical segment; it reads WCFYINLPIGAFAFIILAFCN. Residues 184–227 lie on the Cytoplasmic side of the membrane; the sequence is TSGEPHQKMWLPSKIKKIMNYDYGELLKASFWKNTFEVLVFKLD. Residues 228–248 form a helical membrane-spanning segment; that stretch reads MVGIILSSAGFTLLMLGLSFG. Residues 249–255 lie on the Extracellular side of the membrane; it reads GNNFPWN. Residues 256-276 traverse the membrane as a helical segment; that stretch reads SGIIICFFTVGPILLLLFCAY. Over 277-300 the chain is Cytoplasmic; the sequence is DFHFLSLSGLHYDNKRIKPLLTWN. The helical transmembrane segment at 301 to 321 threads the bilayer; that stretch reads IASNCGIFTSSITGFLSCFAY. Topologically, residues 322 to 341 are extracellular; the sequence is ELQSAYLVQLYQLVFKKKPT. The helical transmembrane segment at 342–362 threads the bilayer; sequence LASIHLWELSIPAMIATMAIA. The Cytoplasmic segment spans residues 363 to 373; the sequence is YLNSKYGIIKP. The chain crosses the membrane as a helical span at residues 374–394; the sequence is AIVFGVLCGIVGSGLFTLING. At 395–399 the chain is on the extracellular side; that stretch reads ELSQS. Residues 400–420 form a helical membrane-spanning segment; it reads IGYSILPGIAFGSIFQATLLS. At 421-443 the chain is on the cytoplasmic side; sequence SQVQITSDDPDFQNKFIEVTAFN. Residues 444-464 form a helical membrane-spanning segment; it reads SFAKSLGFAFGGNMGAMIFTA. Topologically, residues 465 to 508 are extracellular; it reads SLKNQMRSSQLNIPQFTSVETLLAYSTEHYDGPQSSLSKFINTA. A helical membrane pass occupies residues 509 to 529; the sequence is IHDVFYCALGCYALSFFFGIF. Topologically, residues 530-543 are cytoplasmic; the sequence is TSSKKTTISAKKQQ.

The protein belongs to the major facilitator superfamily.

Its subcellular location is the membrane. Its function is as follows. Drug export permease. Multi-copy suppressor of loss-of-function mutation of GAL11. Involved specifically in transcription of GAL4-dependent genes. Can link GAL4 with the basal transcription machinery if GAL11 is missing. Confers resistance to 10-N-nonyl acridine orange (NAO) and in general to cationic dyes. In Saccharomyces cerevisiae (strain ATCC 204508 / S288c) (Baker's yeast), this protein is Protein SGE1 (SGE1).